The sequence spans 321 residues: Coiled-coil domain-containing protein 42-like 1 (321 aa).

Coiled-coil stretches lie at residues 36–144 (IRRL…EKCH) and 202–229 (IVQFSNEIHRLYIRLEKAKKKRREWELR).

Belongs to the CFAP73 family.

This Xenopus laevis (African clawed frog) protein is Coiled-coil domain-containing protein 42-like 1.